A 541-amino-acid polypeptide reads, in one-letter code: uncharacterized protein (541 aa).

The first 17 residues, 1–17, serve as a signal peptide directing secretion; sequence MSFSATILFSPPSGSEA. Disordered stretches follow at residues 28-47 and 103-138; these read TSQGSTGSQGGNPPASTPIT and GKVCTADEDRESRARTPPPEEPGVLKGSPGEASNSL. Over residues 103–116 the composition is skewed to basic and acidic residues; it reads GKVCTADEDRESRA. Threonine 118 bears the Phosphothreonine mark. Residues lysine 128 and lysine 223 each participate in a glycyl lysine isopeptide (Lys-Gly) (interchain with G-Cter in SUMO2) cross-link. Serine 226 carries the post-translational modification Phosphoserine. Polar residues predominate over residues 232–243; sequence AIQRASSETGPE. The tract at residues 232-254 is disordered; the sequence is AIQRASSETGPESGTKLPATRPE. Residues serine 286 and serine 429 each carry the phosphoserine modification. The disordered stretch occupies residues 494-526; it reads YNPNFQEDEGGGNEKGPVSPSYDQPHKTSCPDL.

The protein localises to the secreted. This is an uncharacterized protein from Mus musculus (Mouse).